Consider the following 600-residue polypeptide: MGNHGKLSRVSADRIRNFCIIAHIDHGKSTLADRLLDLTDAVPERERVDQILDTMELERERGITIKAQAVRLLYNRPDGVWTLNLIDTPGHVDFTYEVSRAIAACEGALLVVDASQGIQAQTLANLYLAMEHDLEIIPVLNKIDLPVADVPAATEELVELLGVEPEEVLKISAKTGEGVRGVLDAIVERIPPPRSEHPQTRALVFDSNYDPYRGVIALARVFDGGLKKGDRVQAMGSEEEFEILEVGCYSPKPTALPALQTGQVGYVVAGLKDIGALRVGDTITSADDPAPEPLPGYARVLPTVFCGLYPTEGDDFERLRDALARLQLNDASLFFEPENSRLGFGFRCGFLGLLHMEIVQERLEREFDLDLIVTSPSVKYQVVVDGEVREVTNPSDLPESYDEIREPVVRATIICPREHVGAVMGLCHEKRGVSVGMEYISSLRVQLTYDLPLAEVITDFFDQLKSRTRGYASYDYEPVGYQPADLVKVEVLVAGDPVDSLSIIVHRDKAYQRGRALVEKLKELIPRQQFEVPVQAAVGKRVIARETVRAYRKDVTAKCYGGDITRKRKLLEKQKAGKRRMKQVGRVEIPQEAFLAAIRI.

Residues 13–194 (DRIRNFCIIA…AIVERIPPPR (182 aa)) enclose the tr-type G domain. GTP-binding positions include 25–30 (DHGKST) and 141–144 (NKID).

Belongs to the TRAFAC class translation factor GTPase superfamily. Classic translation factor GTPase family. LepA subfamily.

The protein localises to the cell membrane. The catalysed reaction is GTP + H2O = GDP + phosphate + H(+). Its function is as follows. Required for accurate and efficient protein synthesis under certain stress conditions. May act as a fidelity factor of the translation reaction, by catalyzing a one-codon backward translocation of tRNAs on improperly translocated ribosomes. Back-translocation proceeds from a post-translocation (POST) complex to a pre-translocation (PRE) complex, thus giving elongation factor G a second chance to translocate the tRNAs correctly. Binds to ribosomes in a GTP-dependent manner. In Rubrobacter xylanophilus (strain DSM 9941 / JCM 11954 / NBRC 16129 / PRD-1), this protein is Elongation factor 4.